The chain runs to 145 residues: Hemoglobin subunit beta (145 aa).

The 145-residue stretch at 1–145 (MLTAEEKAAV…VANALAHRYH (145 aa)) folds into the Globin domain. Threonine 11 carries the post-translational modification Phosphothreonine. Lysine 58 carries the N6-acetyllysine modification. Histidine 62 is a binding site for heme b. Lysine 81 carries the N6-acetyllysine modification. Residue histidine 91 participates in heme b binding. S-nitrosocysteine is present on cysteine 92.

Belongs to the globin family. Heterotetramer of two alpha chains and two beta chains. As to expression, red blood cells.

In terms of biological role, involved in oxygen transport from the lung to the various peripheral tissues. The protein is Hemoglobin subunit beta (HBB) of Ovis aries musimon (Mouflon).